Here is a 106-residue protein sequence, read N- to C-terminus: Large ribosomal subunit protein uL24 (106 aa).

This sequence belongs to the universal ribosomal protein uL24 family. As to quaternary structure, part of the 50S ribosomal subunit.

One of two assembly initiator proteins, it binds directly to the 5'-end of the 23S rRNA, where it nucleates assembly of the 50S subunit. Functionally, one of the proteins that surrounds the polypeptide exit tunnel on the outside of the subunit. This Rhodospirillum rubrum (strain ATCC 11170 / ATH 1.1.1 / DSM 467 / LMG 4362 / NCIMB 8255 / S1) protein is Large ribosomal subunit protein uL24.